The sequence spans 594 residues: Cationic amino acid transporter 1 (594 aa).

The residue at position 2 (Ala2) is an N-acetylalanine. The Cytoplasmic portion of the chain corresponds to 2–78 (ASGGGDDGLR…EMKKTLTWWD (77 aa)). A helical membrane pass occupies residues 79–99 (LMWFGIGAVIGSGIFVLTGLE). Residues 100-104 (ARNHS) are Extracellular-facing. Asn102 is a glycosylation site (N-linked (GlcNAc...) asparagine). A helical membrane pass occupies residues 105-125 (GPAVVLSYVVSGVSAMLSVFC). The Cytoplasmic portion of the chain corresponds to 126-149 (YTEFAVEIPVAGGSFAYLRVELGD). Residues 150–170 (FMAFIAAGNIILEYVVGGAAV) traverse the membrane as a helical segment. Over 171 to 201 (ARSWTSYFATLLNHKPEDFRIIVHKLGEDYS) the chain is Extracellular. Residues 202-222 (HLDPIAVGVCAIICVLAVVGT) form a helical membrane-spanning segment. The Cytoplasmic portion of the chain corresponds to 223–227 (KGSSR). Residues 228-248 (FNYIASIIHMVVILFVIIAGF) form a helical membrane-spanning segment. Topologically, residues 249–266 (TKADVKNYSDFTPYGVRG) are extracellular. The N-linked (GlcNAc...) asparagine glycan is linked to Asn255. Residues 267–287 (VFKSAAVLFFAYIGFDAVSTM) traverse the membrane as a helical segment. Topologically, residues 288–297 (AEETKNPGRD) are cytoplasmic. A helical transmembrane segment spans residues 298–318 (IPIGLVGSMVVTTVCYCLMAV). The Extracellular segment spans residues 319–348 (TLCLMQPYQQIDPDAPFSVAFSAVGWDWAK). The chain crosses the membrane as a helical span at residues 349–369 (YIVAFGALKGMTTVLLVGAIG). Residues 370–393 (QARYMTHIARAHMMPPWLAQVNAK) are Cytoplasmic-facing. Residues 394 to 414 (TGTPINATVVMLAATALIAFF) traverse the membrane as a helical segment. Residues 415–418 (TKLK) lie on the Extracellular side of the membrane. Residues 419–439 (ILADLLSVSTLFIFMFVAVAL) traverse the membrane as a helical segment. Residues 440–457 (LVRRYYVTGETSTRDRNK) lie on the Cytoplasmic side of the membrane. Residues 458 to 478 (FLVFLGLILASSTATAVYWAL) traverse the membrane as a helical segment. Residues 479-483 (EEEGW) lie on the Extracellular side of the membrane. The helical transmembrane segment at 484-504 (IGYCITVPIWFLSTVAMKFLV) threads the bilayer. Residues 505-511 (PQARAPK) lie on the Cytoplasmic side of the membrane. The helical transmembrane segment at 512–532 (IWGVPLVPWLPSASIAINIFL) threads the bilayer. The Extracellular portion of the chain corresponds to 533–543 (LGSIDTKSFVR). A helical transmembrane segment spans residues 544–564 (FAIWTGILLIYYVLFGLHATY). Residues 565 to 594 (DTAKATLKEKQALQKAEEGGVVADNSCSAT) are Cytoplasmic-facing.

Belongs to the amino acid-polyamine-organocation (APC) superfamily. Cationic amino acid transporter (CAT) (TC 2.A.3.3) family. As to expression, expressed in roots, stems, flowers, petioles, seeds, siliques, and leaves. Mostly present in major veins.

It localises to the membrane. With respect to regulation, inhibited by the protonophore 2,4-dinitrophenol. In terms of biological role, high-affinity permease involved in the transport of the cationic amino acids (e.g. arginine, lysine, histidine, citrulline, valine, and glutamate). Transport mostly basic amino acids, and, to a lower extent neutral and acidic amino acids. May function as a proton symporter. The sequence is that of Cationic amino acid transporter 1 (CAT1) from Arabidopsis thaliana (Mouse-ear cress).